Here is a 150-residue protein sequence, read N- to C-terminus: Ribonuclease H (150 aa).

An RNase H type-1 domain is found at M1–I141. 4 residues coordinate Mg(2+): D9, E47, D69, and D133.

Belongs to the RNase H family. Monomer. Mg(2+) serves as cofactor.

Its subcellular location is the cytoplasm. It catalyses the reaction Endonucleolytic cleavage to 5'-phosphomonoester.. Endonuclease that specifically degrades the RNA of RNA-DNA hybrids. The protein is Ribonuclease H of Xanthomonas campestris pv. campestris (strain 8004).